The chain runs to 302 residues: tRNA-cytidine(32) 2-sulfurtransferase (302 aa).

The short motif at 43-48 (SGGKDS) is the PP-loop motif element. [4Fe-4S] cluster contacts are provided by Cys118, Cys121, and Cys209.

This sequence belongs to the TtcA family. Homodimer. Mg(2+) serves as cofactor. [4Fe-4S] cluster is required as a cofactor.

It is found in the cytoplasm. It carries out the reaction cytidine(32) in tRNA + S-sulfanyl-L-cysteinyl-[cysteine desulfurase] + AH2 + ATP = 2-thiocytidine(32) in tRNA + L-cysteinyl-[cysteine desulfurase] + A + AMP + diphosphate + H(+). The protein operates within tRNA modification. In terms of biological role, catalyzes the ATP-dependent 2-thiolation of cytidine in position 32 of tRNA, to form 2-thiocytidine (s(2)C32). The sulfur atoms are provided by the cysteine/cysteine desulfurase (IscS) system. This Polynucleobacter asymbioticus (strain DSM 18221 / CIP 109841 / QLW-P1DMWA-1) (Polynucleobacter necessarius subsp. asymbioticus) protein is tRNA-cytidine(32) 2-sulfurtransferase.